The sequence spans 158 residues: Methylated-DNA--protein-cysteine methyltransferase (158 aa).

Cys-126 acts as the Nucleophile; methyl group acceptor in catalysis.

The protein belongs to the MGMT family.

It localises to the cytoplasm. The catalysed reaction is a 6-O-methyl-2'-deoxyguanosine in DNA + L-cysteinyl-[protein] = S-methyl-L-cysteinyl-[protein] + a 2'-deoxyguanosine in DNA. The enzyme catalyses a 4-O-methyl-thymidine in DNA + L-cysteinyl-[protein] = a thymidine in DNA + S-methyl-L-cysteinyl-[protein]. In terms of biological role, involved in the cellular defense against the biological effects of O6-methylguanine (O6-MeG) and O4-methylthymine (O4-MeT) in DNA. Repairs the methylated nucleobase in DNA by stoichiometrically transferring the methyl group to a cysteine residue in the enzyme. This is a suicide reaction: the enzyme is irreversibly inactivated. The chain is Methylated-DNA--protein-cysteine methyltransferase from Methanosarcina barkeri (strain Fusaro / DSM 804).